A 241-amino-acid polypeptide reads, in one-letter code: Type III pantothenate kinase (241 aa).

An ATP-binding site is contributed by 6 to 13; it reads DVGNTRIK. 94-97 provides a ligand contact to substrate; it reads GIDR. The Proton acceptor role is filled by D96. K(+) is bound at residue D117. T120 serves as a coordination point for ATP. T172 is a binding site for substrate.

This sequence belongs to the type III pantothenate kinase family. Homodimer. It depends on NH4(+) as a cofactor. K(+) serves as cofactor.

The protein localises to the cytoplasm. The enzyme catalyses (R)-pantothenate + ATP = (R)-4'-phosphopantothenate + ADP + H(+). Its pathway is cofactor biosynthesis; coenzyme A biosynthesis; CoA from (R)-pantothenate: step 1/5. Functionally, catalyzes the phosphorylation of pantothenate (Pan), the first step in CoA biosynthesis. This is Type III pantothenate kinase from Flavobacterium psychrophilum (strain ATCC 49511 / DSM 21280 / CIP 103535 / JIP02/86).